The following is a 734-amino-acid chain: Photosystem I P700 chlorophyll a apoprotein A2 (734 aa).

A run of 8 helical transmembrane segments spans residues 46-69, 135-158, 175-199, 273-291, 330-353, 369-395, 417-439, and 517-535; these read IFAS…FHVA, LYTG…LHLQ, LNHH…HVAI, IAHH…GHMY, LHFQ…QHMY, AALY…ILVI, AIIS…LYVH, and FLVH…LILV. [4Fe-4S] cluster is bound by residues Cys-559 and Cys-568. A run of 2 helical transmembrane segments spans residues 575-596 and 643-665; these read AFYL…YWHW and LSVW…MFLI. 3 residues coordinate chlorophyll a: His-654, Met-662, and Tyr-670. Position 671 (Trp-671) interacts with phylloquinone. Residues 707 to 727 form a helical membrane-spanning segment; it reads LVGLAHFSVGYIFTYAAFLIA.

It belongs to the PsaA/PsaB family. The PsaA/B heterodimer binds the P700 chlorophyll special pair and subsequent electron acceptors. PSI consists of a core antenna complex that captures photons, and an electron transfer chain that converts photonic excitation into a charge separation. The eukaryotic PSI reaction center is composed of at least 11 subunits. It depends on P700 is a chlorophyll a/chlorophyll a' dimer, A0 is one or more chlorophyll a, A1 is one or both phylloquinones and FX is a shared 4Fe-4S iron-sulfur center. as a cofactor.

The protein localises to the plastid. Its subcellular location is the chloroplast thylakoid membrane. It carries out the reaction reduced [plastocyanin] + hnu + oxidized [2Fe-2S]-[ferredoxin] = oxidized [plastocyanin] + reduced [2Fe-2S]-[ferredoxin]. Functionally, psaA and PsaB bind P700, the primary electron donor of photosystem I (PSI), as well as the electron acceptors A0, A1 and FX. PSI is a plastocyanin-ferredoxin oxidoreductase, converting photonic excitation into a charge separation, which transfers an electron from the donor P700 chlorophyll pair to the spectroscopically characterized acceptors A0, A1, FX, FA and FB in turn. Oxidized P700 is reduced on the lumenal side of the thylakoid membrane by plastocyanin. This Atropa belladonna (Belladonna) protein is Photosystem I P700 chlorophyll a apoprotein A2.